Here is an 802-residue protein sequence, read N- to C-terminus: Ras GTPase-activating protein 4 (802 aa).

C2 domains lie at 1-105 (MAKR…SGWT) and 116-232 (VQGE…EGWF). The Ca(2+) site is built by Asp21, Asp27, Asp74, Asp76, Ser79, Asp82, Asp149, Asp155, Asp202, Asp204, Ser207, and Asp210. The Ras-GAP domain occupies 317–545 (GLAKDFLDLL…AQLKDFIMKL (229 aa)). The PH domain occupies 565 to 672 (PPVKEGPLFI…WLSALRKAST (108 aa)). The segment at 674–710 (NRGLLRSYHPGIFRGDKWSCCHQKDKTDQGCDKTHSR) adopts a Btk-type zinc-finger fold. Positions 682, 693, 694, and 704 each coordinate Zn(2+).

Ca(2+) is required as a cofactor. Isoform 2 is expressed in osteoblasts.

It is found in the cytoplasm. The protein resides in the cytosol. The protein localises to the cell membrane. Functionally, ca(2+)-dependent Ras GTPase-activating protein, that switches off the Ras-MAPK pathway following a stimulus that elevates intracellular calcium. Functions as an adaptor for Cdc42 and Rac1 during FcR-mediated phagocytosis. Isoform 2 activates the Ras pathway and promotes RANKL shedding by modulating the expression of MMP14. The protein is Ras GTPase-activating protein 4 (Rasa4) of Mus musculus (Mouse).